The following is a 944-amino-acid chain: Isoleucine--tRNA ligase (944 aa).

The short motif at Pro-58–His-68 is the 'HIGH' region element. Glu-563 contributes to the L-isoleucyl-5'-AMP binding site. A 'KMSKS' region motif is present at residues Lys-604–Ser-608. Lys-607 contributes to the ATP binding site. Positions 907, 910, 927, and 930 each coordinate Zn(2+).

The protein belongs to the class-I aminoacyl-tRNA synthetase family. IleS type 1 subfamily. As to quaternary structure, monomer. Zn(2+) is required as a cofactor.

It localises to the cytoplasm. It catalyses the reaction tRNA(Ile) + L-isoleucine + ATP = L-isoleucyl-tRNA(Ile) + AMP + diphosphate. Its function is as follows. Catalyzes the attachment of isoleucine to tRNA(Ile). As IleRS can inadvertently accommodate and process structurally similar amino acids such as valine, to avoid such errors it has two additional distinct tRNA(Ile)-dependent editing activities. One activity is designated as 'pretransfer' editing and involves the hydrolysis of activated Val-AMP. The other activity is designated 'posttransfer' editing and involves deacylation of mischarged Val-tRNA(Ile). In Salmonella typhimurium (strain LT2 / SGSC1412 / ATCC 700720), this protein is Isoleucine--tRNA ligase.